The following is a 165-amino-acid chain: Transcription antitermination protein NusB (165 aa).

It belongs to the NusB family.

In terms of biological role, involved in transcription antitermination. Required for transcription of ribosomal RNA (rRNA) genes. Binds specifically to the boxA antiterminator sequence of the ribosomal RNA (rrn) operons. This chain is Transcription antitermination protein NusB, found in Rhodococcus erythropolis (strain PR4 / NBRC 100887).